Here is a 157-residue protein sequence, read N- to C-terminus: Protein Smg (157 aa).

Belongs to the Smg family.

The polypeptide is Protein Smg (Escherichia coli O6:H1 (strain CFT073 / ATCC 700928 / UPEC)).